Reading from the N-terminus, the 294-residue chain is Protease HtpX homolog 2 (294 aa).

Transmembrane regions (helical) follow at residues 15 to 35 and 37 to 57; these read MLFTMFLLAAVYLFFLAFLSY and GTPPVFMLLFVGAFMGIQYFY. Histidine 140 is a binding site for Zn(2+). Residue glutamate 141 is part of the active site. Histidine 144 contacts Zn(2+). Transmembrane regions (helical) follow at residues 151-171 and 185-205; these read AVLTIASFISTIAFYIVRYSL and GGILLVWLVSIAVWVVSFLLI. Glutamate 213 provides a ligand contact to Zn(2+).

Belongs to the peptidase M48B family. Zn(2+) serves as cofactor.

The protein localises to the cell membrane. The polypeptide is Protease HtpX homolog 2 (Methanosarcina acetivorans (strain ATCC 35395 / DSM 2834 / JCM 12185 / C2A)).